The chain runs to 77 residues: Small ribosomal subunit protein bS18 (77 aa).

This sequence belongs to the bacterial ribosomal protein bS18 family. Part of the 30S ribosomal subunit. Forms a tight heterodimer with protein bS6.

Binds as a heterodimer with protein bS6 to the central domain of the 16S rRNA, where it helps stabilize the platform of the 30S subunit. In Halalkalibacterium halodurans (strain ATCC BAA-125 / DSM 18197 / FERM 7344 / JCM 9153 / C-125) (Bacillus halodurans), this protein is Small ribosomal subunit protein bS18.